A 239-amino-acid polypeptide reads, in one-letter code: Large ribosomal subunit protein uL2 (239 aa).

Disordered regions lie at residues 1 to 21 and 203 to 239; these read MGKS…KSPS and PFGG…GRRK. Positions 222–239 are enriched in basic residues; it reads PPGRKVGHIAARRTGRRK.

This sequence belongs to the universal ribosomal protein uL2 family. As to quaternary structure, part of the 50S ribosomal subunit. Forms a bridge to the 30S subunit in the 70S ribosome.

One of the primary rRNA binding proteins. Required for association of the 30S and 50S subunits to form the 70S ribosome, for tRNA binding and peptide bond formation. It has been suggested to have peptidyltransferase activity; this is somewhat controversial. Makes several contacts with the 16S rRNA in the 70S ribosome. In Pyrococcus furiosus (strain ATCC 43587 / DSM 3638 / JCM 8422 / Vc1), this protein is Large ribosomal subunit protein uL2.